A 587-amino-acid polypeptide reads, in one-letter code: Methylcrotonoyl-CoA carboxylase beta chain, mitochondrial (587 aa).

The N-terminal 26 residues, 1 to 26 (MLRILGRRVVSASKELTSIQQWRIRP), are a transit peptide targeting the mitochondrion. In terms of domain architecture, CoA carboxyltransferase N-terminal spans 68–324 (MEGILSELRS…AAKQGMEGTF (257 aa)). Positions 68–579 (MEGILSELRS…SAALNRPLED (512 aa)) are carboxyltransferase. The region spanning 333–579 (EPLYDINELR…SAALNRPLED (247 aa)) is the CoA carboxyltransferase C-terminal domain. Positions 367-396 (EFDEFKKQYGTTLVTGFARIYGQTVGIIGN) are acyl-CoA binding.

Belongs to the AccD/PCCB family. As to quaternary structure, probably a heterodimer composed of biotin-containing alpha subunits and beta subunits. As to expression, in roots, cotyledons, leaves, flowers, ovaries, siliques and embryos.

The protein localises to the mitochondrion matrix. The catalysed reaction is 3-methylbut-2-enoyl-CoA + hydrogencarbonate + ATP = 3-methyl-(2E)-glutaconyl-CoA + ADP + phosphate + H(+). It participates in amino-acid degradation; L-leucine degradation; (S)-3-hydroxy-3-methylglutaryl-CoA from 3-isovaleryl-CoA: step 2/3. Functionally, carboxyltransferase subunit of the 3-methylcrotonyl-CoA carboxylase, an enzyme that catalyzes the conversion of 3-methylcrotonyl-CoA to 3-methylglutaconyl-CoA, a critical step for leucine and isovaleric acid catabolism. This is Methylcrotonoyl-CoA carboxylase beta chain, mitochondrial (MCCB) from Arabidopsis thaliana (Mouse-ear cress).